Consider the following 326-residue polypeptide: Pyruvate dehydrogenase E1 component subunit alpha (326 aa).

In terms of assembly, heterodimer of an alpha and a beta chain. The cofactor is thiamine diphosphate.

The enzyme catalyses N(6)-[(R)-lipoyl]-L-lysyl-[protein] + pyruvate + H(+) = N(6)-[(R)-S(8)-acetyldihydrolipoyl]-L-lysyl-[protein] + CO2. Functionally, the pyruvate dehydrogenase complex catalyzes the overall conversion of pyruvate to acetyl-CoA and CO(2). It contains multiple copies of three enzymatic components: pyruvate dehydrogenase (E1), dihydrolipoamide acetyltransferase (E2) and lipoamide dehydrogenase (E3). The protein is Pyruvate dehydrogenase E1 component subunit alpha (pdhA) of Rickettsia felis (strain ATCC VR-1525 / URRWXCal2) (Rickettsia azadi).